We begin with the raw amino-acid sequence, 90 residues long: Nodulation protein NolS (90 aa).

Its function is as follows. Involved in nodulation of a particular host, M.lupulina. The polypeptide is Nodulation protein NolS (nolS) (Sinorhizobium meliloti (strain Sm2011 / Rm2011 / 2011)).